Consider the following 348-residue polypeptide: Aspartate carbamoyltransferase catalytic subunit (348 aa).

The carbamoyl phosphate site is built by R59 and T60. K87 is an L-aspartate binding site. The carbamoyl phosphate site is built by R109, H142, and Q145. 2 residues coordinate L-aspartate: R182 and R253. 2 residues coordinate carbamoyl phosphate: G294 and P295.

Belongs to the aspartate/ornithine carbamoyltransferase superfamily. ATCase family. Heterododecamer (2C3:3R2) of six catalytic PyrB chains organized as two trimers (C3), and six regulatory PyrI chains organized as three dimers (R2).

It catalyses the reaction carbamoyl phosphate + L-aspartate = N-carbamoyl-L-aspartate + phosphate + H(+). It participates in pyrimidine metabolism; UMP biosynthesis via de novo pathway; (S)-dihydroorotate from bicarbonate: step 2/3. Functionally, catalyzes the condensation of carbamoyl phosphate and aspartate to form carbamoyl aspartate and inorganic phosphate, the committed step in the de novo pyrimidine nucleotide biosynthesis pathway. This Prochlorococcus marinus (strain MIT 9303) protein is Aspartate carbamoyltransferase catalytic subunit.